Here is a 166-residue protein sequence, read N- to C-terminus: Peptide methionine sulfoxide reductase MsrA (166 aa).

Residue C11 is part of the active site.

The protein belongs to the MsrA Met sulfoxide reductase family.

It catalyses the reaction L-methionyl-[protein] + [thioredoxin]-disulfide + H2O = L-methionyl-(S)-S-oxide-[protein] + [thioredoxin]-dithiol. The enzyme catalyses [thioredoxin]-disulfide + L-methionine + H2O = L-methionine (S)-S-oxide + [thioredoxin]-dithiol. In terms of biological role, has an important function as a repair enzyme for proteins that have been inactivated by oxidation. Catalyzes the reversible oxidation-reduction of methionine sulfoxide in proteins to methionine. The chain is Peptide methionine sulfoxide reductase MsrA from Mycoplasmopsis pulmonis (strain UAB CTIP) (Mycoplasma pulmonis).